Reading from the N-terminus, the 520-residue chain is Transcription factor MYB33 (520 aa).

A disordered region spans residues 1–24; the sequence is MSYTSTDSDHNESPAADDNGSDCR. HTH myb-type domains follow at residues 29–81 and 82–136; these read GHAL…ANHL and RPNL…KRRQ. DNA-binding regions (H-T-H motif) lie at residues 57–81 and 109–132; these read WNAV…ANHL and WARM…NTRI. Over residues 331–342 the composition is skewed to low complexity; that stretch reads SSSPPHSDLLDP. Disordered stretches follow at residues 331 to 359 and 426 to 447; these read SSSP…GEES and EMST…RKPL.

In terms of tissue distribution, mostly expressed in stems, shoot apices, flowers and floral shoot tips, and, to a lower extent, in roots (e.g. root tips), seedlings, leaves and siliques.

Its subcellular location is the nucleus. Functionally, transcriptional activator of alpha-amylase expression that binds to 5'-CAACTGTC-3' motif in target gene promoter. Positive regulator of abscisic acid (ABA) responses leading to growth arrest during seed germination. In vegetative tissues, inhibits growth by reducing cell proliferation. Promotes the expression of aleurone-related genes (e.g. CP1, CP, GASA1, BXL1 and BXL2) in seeds. Together with MYB65 and MYB101, promotes the programmed cell death (PCD) the vacuolation of protein storage vacuoles (PSVs) in the aleurone layers during seed germination. Binds to a GARE site (GA-response element) in the LEAFY promoter, essential for its gibberellic acid (GA)-mediated induction. Together with MYB65, facilitates anther and tapetum development. This chain is Transcription factor MYB33, found in Arabidopsis thaliana (Mouse-ear cress).